The primary structure comprises 521 residues: MTEFINRLQKVASNPNAFKKTGRGIERETLRFTPGASLSTKPHPEGVGSALTHKYITTDFAESLLEFITPVSNDVDTVLKQLEDVHHYTVSHMGDEKLWPLSMPCFVTHDDDITLAQYGESNVGKLKTTYREGLKRRYGSVMQVISGVHFNFSFSTEFWDELFGEQSEDQRKESVSDAYFALIRNYYRFGWLIPYFFGASPALCSSFIQGRETSMDFESLGKTYYLPYATSLRLSDLGYTNDAQSNLKISLNSVNEYVDGLNKAIRTPSEEFAKIGLKEGDKHIQLNSNVLQIENELYAPIRPKRVAKSGERPSEALERDGVEYIEVRSLDVNPYSPIGVNEDQVRFLDMFLTWTVLSDSAPMNDSEMACWKDNWNKIIEKGRKPGLELKIGCQGERLTQKAWAERVFEDLLIIAKEMDRVNGDDAYQQTHKRLSAMIDDPELTISGRLLAETKAAGGIGVIGCKLAVEHRETHLAHQYRFYTKQELDTEVERSVQAQKEIEANDKLSFSEYLEEYFSYLK.

It belongs to the glutamate--cysteine ligase type 1 family. Type 1 subfamily.

It catalyses the reaction L-cysteine + L-glutamate + ATP = gamma-L-glutamyl-L-cysteine + ADP + phosphate + H(+). Its pathway is sulfur metabolism; glutathione biosynthesis; glutathione from L-cysteine and L-glutamate: step 1/2. This is Glutamate--cysteine ligase from Aliivibrio fischeri (strain MJ11) (Vibrio fischeri).